Reading from the N-terminus, the 377-residue chain is Alanine racemase (377 aa).

The active-site Proton acceptor; specific for D-alanine is Lys-33. Lys-33 bears the N6-(pyridoxal phosphate)lysine mark. Substrate is bound at residue Arg-134. Tyr-267 (proton acceptor; specific for L-alanine) is an active-site residue. Met-315 contacts substrate.

Belongs to the alanine racemase family. It depends on pyridoxal 5'-phosphate as a cofactor.

It carries out the reaction L-alanine = D-alanine. Its pathway is amino-acid biosynthesis; D-alanine biosynthesis; D-alanine from L-alanine: step 1/1. Its function is as follows. Catalyzes the interconversion of L-alanine and D-alanine. May also act on other amino acids. The sequence is that of Alanine racemase (alr) from Treponema pallidum subsp. pallidum (strain SS14).